Consider the following 616-residue polypeptide: Chaperone protein HscA homolog (616 aa).

The protein belongs to the heat shock protein 70 family.

In terms of biological role, chaperone involved in the maturation of iron-sulfur cluster-containing proteins. Has a low intrinsic ATPase activity which is markedly stimulated by HscB. The protein is Chaperone protein HscA homolog of Histophilus somni (strain 2336) (Haemophilus somnus).